The primary structure comprises 433 residues: MNSDLETRVLRKITLRIVPFIMLLYFVAFLDRVNIGFAALTMNEDLGFSSTVFGIGAGIFFVGYFLFEVPSNLILNKVGARIWIARVMITWGIVSGLMAFVQGTTSFYALRFLLGVAEAGFFPGIILYLSFWFPARRRAAVTAIFMAAAPLSTVLGSPISGALMEMHGFLGLAGWQWMFLIEAAPAVILGVVVLFYLTDRPEKAKWLSEDERNWLVKTMNAEQAAKGKASHSILAGLADIRVIALALVYFGTSAGLYTLGIWAPQIIKEFGLSSLQVGFINAVPGIFAVAAMVLWARHSDKTGERTWHVVGACLLAAVGLAFATGATSVFTVLIALTLVNIGISCSKPPLWSMPTLFLSGPAAAAGIATINSIGNLGGFVGPSMIGWIKDTTGSFAGGLYFVAGLLVVSAIVTLVLSRTAPENGGKVAPVQHR.

11 consecutive transmembrane segments (helical) span residues I17 to F37, G47 to F67, I82 to Q102, L113 to F133, A139 to I159, W177 to L197, V242 to W262, L275 to W295, L314 to I334, L350 to I370, and F395 to V415.

The protein belongs to the major facilitator superfamily. Phthalate permease family.

The protein localises to the cell membrane. In terms of biological role, component of the tartrate utilization system and may allow entry of tartrate and tartrate dehydrogenase. The protein is Putative tartrate transporter (ttuB) of Agrobacterium vitis (Rhizobium vitis).